Consider the following 208-residue polypeptide: Ion-translocating oxidoreductase complex subunit G (208 aa).

A helical membrane pass occupies residues 9-29 (GVTLAVFAALTTGLTAMVNAL). Threonine 174 is modified (FMN phosphoryl threonine).

The protein belongs to the RnfG family. As to quaternary structure, the complex is composed of six subunits: RnfA, RnfB, RnfC, RnfD, RnfE and RnfG. Requires FMN as cofactor.

It is found in the cell inner membrane. In terms of biological role, part of a membrane-bound complex that couples electron transfer with translocation of ions across the membrane. The chain is Ion-translocating oxidoreductase complex subunit G from Cronobacter sakazakii (strain ATCC BAA-894) (Enterobacter sakazakii).